Consider the following 228-residue polypeptide: CD302 antigen (228 aa).

An N-terminal signal peptide occupies residues 1–20 (MPHAALSSLVLLSLATAIFA). At 21–165 (DCPSSIWVQF…YDKKYLSDNH (145 aa)) the chain is on the extracellular side. Residues 30 to 149 (FQGSCYTFLQ…CEMSSVTGTL (120 aa)) form the C-type lectin domain. Asn-107 is a glycosylation site (N-linked (GlcNAc...) asparagine). A disulfide bridge connects residues Cys-125 and Cys-140. A helical membrane pass occupies residues 166 to 186 (ILISTLVIASTVTLAVLGAVI). The Cytoplasmic segment spans residues 187–228 (WFLYRRSARSGFTSFSPAPQSPYSDGCALVVSEEDEYSVQLD).

Its subcellular location is the membrane. The protein localises to the cell projection. The protein resides in the filopodium. It localises to the cytoplasm. It is found in the cell cortex. Its subcellular location is the microvillus. Potential multifunctional C-type lectin receptor that may play roles in endocytosis and phagocytosis as well as in cell adhesion and migration. The chain is CD302 antigen (Cd302) from Rattus norvegicus (Rat).